The primary structure comprises 50 residues: Defensin D2 (50 aa).

4 cysteine pairs are disulfide-bonded: Cys3–Cys50, Cys14–Cys35, Cys20–Cys44, and Cys24–Cys46.

Contains 4 disulfide bonds.

The protein localises to the secreted. Antimicrobial peptide active against fungi, Gram-positive and Gram-negative bacteria. Inhibits growth of hyphae in the fungi A.niger (IC(50)=3.5 ug/ml), B.sorokiniana (IC(50)=1.8 ug/ml), F.oxysporum (IC(50)=5.3 ug/ml), F.graminearum (IC(50)=6.9 ug/ml), F.culmorum (IC(50)=6.9 ug/ml) and B.cinerea (IC(50)=13.7 ug/ml). Has no effect on spore germination. Destroys spores in germinated conidia by disruption of cell walls and membranes in A.niger and B.sorokiniana. Causes vacuolization of germinated macro- and microconidia in F.oxysporum, F.graminearum and F.culmorum. Strongly inhibits growth of P.infestans on potato tubers above concentrations of 3.4 ug/ml. Inhibits growth of Gram-positive bacteria C.michiganensis and B.subtilis and of Gram-negative bacteria P.syringae, E.carotovora and E.coli. The protein is Defensin D2 of Nigella sativa (Black cumin).